The sequence spans 191 residues: Auxin-responsive protein IAA32 (191 aa).

The short motif at 32–36 (LGLSL) is the EAR-like (transcriptional repression) element. Residues 98-184 (YAYVKVNLDG…SVDRMRIARR (87 aa)) form the PB1 domain.

It belongs to the Aux/IAA family. As to quaternary structure, homodimers and heterodimers.

The protein localises to the nucleus. Its function is as follows. Aux/IAA proteins are short-lived transcriptional factors that function as repressors of early auxin response genes at low auxin concentrations. Repression is thought to result from the interaction with auxin response factors (ARFs), proteins that bind to the auxin-responsive promoter element (AuxRE). Formation of heterodimers with ARF proteins may alter their ability to modulate early auxin response genes expression. This is Auxin-responsive protein IAA32 from Arabidopsis thaliana (Mouse-ear cress).